We begin with the raw amino-acid sequence, 583 residues long: Aspartate--tRNA ligase (583 aa).

Residue glutamate 169 coordinates L-aspartate. The segment at glutamine 193–lysine 196 is aspartate. Arginine 215 provides a ligand contact to L-aspartate. Residues arginine 215–glutamate 217 and glutamine 224 each bind ATP. Histidine 443 provides a ligand contact to L-aspartate. Position 477 (glutamate 477) interacts with ATP. Arginine 484 lines the L-aspartate pocket. Glycine 529 to arginine 532 serves as a coordination point for ATP.

The protein belongs to the class-II aminoacyl-tRNA synthetase family. Type 1 subfamily. In terms of assembly, homodimer.

It localises to the cytoplasm. The enzyme catalyses tRNA(Asp) + L-aspartate + ATP = L-aspartyl-tRNA(Asp) + AMP + diphosphate. Its function is as follows. Catalyzes the attachment of L-aspartate to tRNA(Asp) in a two-step reaction: L-aspartate is first activated by ATP to form Asp-AMP and then transferred to the acceptor end of tRNA(Asp). This is Aspartate--tRNA ligase from Stenotrophomonas maltophilia (strain R551-3).